A 218-amino-acid polypeptide reads, in one-letter code: Superoxide dismutase [Mn], mitochondrial (218 aa).

Mn(2+)-binding residues include H27, H84, D174, and H178.

The protein belongs to the iron/manganese superoxide dismutase family. As to quaternary structure, homotetramer. It depends on Mn(2+) as a cofactor.

It is found in the mitochondrion matrix. It carries out the reaction 2 superoxide + 2 H(+) = H2O2 + O2. Destroys superoxide anion radicals which are normally produced within the cells and which are toxic to biological systems. The polypeptide is Superoxide dismutase [Mn], mitochondrial (SODA) (Chlamydomonas reinhardtii (Chlamydomonas smithii)).